The sequence spans 188 residues: Grand meiotic recombination cluster protein 2 (188 aa).

Polar residues-rich tracts occupy residues 1-13 (MSDT…QSSE) and 21-31 (ERTNSLKSPDV). The disordered stretch occupies residues 1–31 (MSDTTEVPRQSSENDQDNNLERTNSLKSPDV).

Probable transcriptional activator involved in meiotic prophase and synaptonemal complex (SC) assembly. The chain is Grand meiotic recombination cluster protein 2 (GMC2) from Saccharomyces cerevisiae (strain ATCC 204508 / S288c) (Baker's yeast).